Consider the following 429-residue polypeptide: Histidine--tRNA ligase (429 aa).

This sequence belongs to the class-II aminoacyl-tRNA synthetase family. Homodimer.

It is found in the cytoplasm. It carries out the reaction tRNA(His) + L-histidine + ATP = L-histidyl-tRNA(His) + AMP + diphosphate + H(+). The chain is Histidine--tRNA ligase from Chlorobium phaeobacteroides (strain DSM 266 / SMG 266 / 2430).